We begin with the raw amino-acid sequence, 1017 residues long: uncharacterized protein (1017 aa).

The tat-type signal signal peptide spans 1-34 (MGNLTMSRRTFVKTAAITGAAAAAFGASTHTALA). The 59-residue stretch at 45–103 (DTVAVKTCCRGCGKMECGVKVIVQNGRAIRVEGDEGAFQSMGNCCTKSQSSIQAAYHPD) folds into the 4Fe-4S Mo/W bis-MGD-type domain. [4Fe-4S] cluster is bound by residues cysteine 53, cysteine 56, cysteine 61, and cysteine 89. The active-site Electron donor/acceptor is the lysine 91.

It belongs to the prokaryotic molybdopterin-containing oxidoreductase family. Requires [4Fe-4S] cluster as cofactor. Mo-bis(molybdopterin guanine dinucleotide) serves as cofactor. Predicted to be exported by the Tat system. The position of the signal peptide cleavage has not been experimentally proven.

This is an uncharacterized protein from Eggerthella lenta (strain ATCC 25559 / DSM 2243 / CCUG 17323 / JCM 9979 / KCTC 3265 / NCTC 11813 / VPI 0255 / 1899 B) (Eubacterium lentum).